Here is a 304-residue protein sequence, read N- to C-terminus: Ribonuclease Z (304 aa).

Histidine 63, histidine 65, aspartate 67, histidine 68, histidine 143, aspartate 213, and histidine 271 together coordinate Zn(2+). The active-site Proton acceptor is aspartate 67.

Belongs to the RNase Z family. Homodimer. It depends on Zn(2+) as a cofactor.

It catalyses the reaction Endonucleolytic cleavage of RNA, removing extra 3' nucleotides from tRNA precursor, generating 3' termini of tRNAs. A 3'-hydroxy group is left at the tRNA terminus and a 5'-phosphoryl group is left at the trailer molecule.. Its function is as follows. Zinc phosphodiesterase, which displays some tRNA 3'-processing endonuclease activity. Probably involved in tRNA maturation, by removing a 3'-trailer from precursor tRNA. This is Ribonuclease Z from Porphyromonas gingivalis (strain ATCC 33277 / DSM 20709 / CIP 103683 / JCM 12257 / NCTC 11834 / 2561).